Here is a 178-residue protein sequence, read N- to C-terminus: Transcription termination/antitermination protein NusG (178 aa).

The region spanning serine 130–valine 159 is the KOW domain.

The protein belongs to the NusG family.

Its function is as follows. Participates in transcription elongation, termination and antitermination. The protein is Transcription termination/antitermination protein NusG of Halalkalibacterium halodurans (strain ATCC BAA-125 / DSM 18197 / FERM 7344 / JCM 9153 / C-125) (Bacillus halodurans).